A 367-amino-acid polypeptide reads, in one-letter code: Small ribosomal subunit biogenesis GTPase RsgA (367 aa).

Positions 112–267 (AEQVLATNVD…VIDTPGLREL (156 aa)) constitute a CP-type G domain. Residues 157–160 (NKSD) and 209–217 (GSSGAGKST) contribute to the GTP site. Zn(2+)-binding residues include Cys291, Cys296, His298, and Cys304.

The protein belongs to the TRAFAC class YlqF/YawG GTPase family. RsgA subfamily. Monomer. Associates with 30S ribosomal subunit, binds 16S rRNA. Zn(2+) serves as cofactor.

It is found in the cytoplasm. One of several proteins that assist in the late maturation steps of the functional core of the 30S ribosomal subunit. Helps release RbfA from mature subunits. May play a role in the assembly of ribosomal proteins into the subunit. Circularly permuted GTPase that catalyzes slow GTP hydrolysis, GTPase activity is stimulated by the 30S ribosomal subunit. The sequence is that of Small ribosomal subunit biogenesis GTPase RsgA from Opitutus terrae (strain DSM 11246 / JCM 15787 / PB90-1).